Reading from the N-terminus, the 203-residue chain is Large ribosomal subunit protein bL25 (203 aa).

A disordered region spans residues 1–21; sequence MMENLQVNQREKKTRHSSRQC. Basic residues predominate over residues 12 to 21; the sequence is KKTRHSSRQC.

It belongs to the bacterial ribosomal protein bL25 family. CTC subfamily. Part of the 50S ribosomal subunit; part of the 5S rRNA/L5/L18/L25 subcomplex. Contacts the 5S rRNA. Binds to the 5S rRNA independently of L5 and L18.

Functionally, this is one of the proteins that binds to the 5S RNA in the ribosome where it forms part of the central protuberance. The sequence is that of Large ribosomal subunit protein bL25 from Clostridium perfringens (strain 13 / Type A).